The primary structure comprises 59 residues: Potassium channel toxin alpha-KTx 4.7 (59 aa).

The signal sequence occupies residues 1-22 (MKAFYGILIIFILISMLDLSQQ). Disulfide bonds link cysteine 29-cysteine 50, cysteine 35-cysteine 55, and cysteine 39-cysteine 57. The tract at residues 48-55 (GKCMNGKC) is interaction with Ca(2+)-activated K(+) channels.

The protein belongs to the short scorpion toxin superfamily. Potassium channel inhibitor family. Alpha-KTx 04 subfamily. In terms of tissue distribution, expressed by the venom gland.

The protein resides in the secreted. Functionally, potently blocks Kv1.1/KCNA1 (85%), Kv1.2/KCNA2 (91%), Kv1.3/KCNA3 (89%), Kv1.6/KCNA6 (94%), and Shaker (97%). In Tityus stigmurus (Brazilian scorpion), this protein is Potassium channel toxin alpha-KTx 4.7.